A 616-amino-acid chain; its full sequence is Dihydroxy-acid dehydratase (616 aa).

Residue Asp-81 coordinates Mg(2+). Cys-122 is a binding site for [2Fe-2S] cluster. Mg(2+) contacts are provided by Asp-123 and Lys-124. Lys-124 is subject to N6-carboxylysine. Position 195 (Cys-195) interacts with [2Fe-2S] cluster. Glu-491 lines the Mg(2+) pocket. The active-site Proton acceptor is the Ser-517.

This sequence belongs to the IlvD/Edd family. As to quaternary structure, homodimer. The cofactor is [2Fe-2S] cluster. Mg(2+) is required as a cofactor.

It catalyses the reaction (2R)-2,3-dihydroxy-3-methylbutanoate = 3-methyl-2-oxobutanoate + H2O. It carries out the reaction (2R,3R)-2,3-dihydroxy-3-methylpentanoate = (S)-3-methyl-2-oxopentanoate + H2O. It participates in amino-acid biosynthesis; L-isoleucine biosynthesis; L-isoleucine from 2-oxobutanoate: step 3/4. The protein operates within amino-acid biosynthesis; L-valine biosynthesis; L-valine from pyruvate: step 3/4. Functionally, functions in the biosynthesis of branched-chain amino acids. Catalyzes the dehydration of (2R,3R)-2,3-dihydroxy-3-methylpentanoate (2,3-dihydroxy-3-methylvalerate) into 2-oxo-3-methylpentanoate (2-oxo-3-methylvalerate) and of (2R)-2,3-dihydroxy-3-methylbutanoate (2,3-dihydroxyisovalerate) into 2-oxo-3-methylbutanoate (2-oxoisovalerate), the penultimate precursor to L-isoleucine and L-valine, respectively. This is Dihydroxy-acid dehydratase from Yersinia pseudotuberculosis serotype I (strain IP32953).